Reading from the N-terminus, the 300-residue chain is MDGILNINKPFGITSFDVVAKVRRIYSQKRVGHGGTLDPYATGVIPVFLGKSTRLIEYLSSVSKTYLAEIELGVETDSYDSEGEITFRKTCDYVTREMIYKTLMDFQGEIIQIPPMYSAVKHRGMRLYNLARQGIEVERIPRVATIYGIELLNYTSPVLRVRIECGHGTYIRSLAFDLGRKLGCGAYLKSLVREAYGQFNLTNSLDFADLEAAKCDGKLAGILLPLETAIGHLPRVSLDEENITRLVNGLEITLDRIDKPEAVAVYNAENSFVAIIQPETDGTWHPAKVFIRQSPKPDAN.

The Nucleophile role is filled by D38.

It belongs to the pseudouridine synthase TruB family. Type 1 subfamily.

It catalyses the reaction uridine(55) in tRNA = pseudouridine(55) in tRNA. Functionally, responsible for synthesis of pseudouridine from uracil-55 in the psi GC loop of transfer RNAs. This Dehalococcoides mccartyi (strain ATCC BAA-2100 / JCM 16839 / KCTC 5957 / BAV1) protein is tRNA pseudouridine synthase B.